The primary structure comprises 408 residues: tRNA pseudouridine synthase D (408 aa).

Asp-76 serves as the catalytic Nucleophile. The 214-residue stretch at 149 to 362 (GFINYYDSQR…NSFERKVRIL (214 aa)) folds into the TRUD domain.

Belongs to the pseudouridine synthase TruD family.

The enzyme catalyses uridine(13) in tRNA = pseudouridine(13) in tRNA. Its function is as follows. Responsible for synthesis of pseudouridine from uracil-13 in transfer RNAs. The polypeptide is tRNA pseudouridine synthase D (Leptospira interrogans serogroup Icterohaemorrhagiae serovar Lai (strain 56601)).